A 394-amino-acid chain; its full sequence is Elongation factor Tu (394 aa).

A tr-type G domain is found at 10-204 (KPHVNVGTIG…HLDTYIPEPE (195 aa)). The segment at 19-26 (GHVDHGKT) is G1. 19-26 (GHVDHGKT) is a binding site for GTP. Residue T26 participates in Mg(2+) binding. The interval 60–64 (GITIN) is G2. A G3 region spans residues 81–84 (DCPG). GTP is bound by residues 81–85 (DCPGH) and 136–139 (NKCD). Positions 136–139 (NKCD) are G4. The G5 stretch occupies residues 174 to 176 (SAL).

Belongs to the TRAFAC class translation factor GTPase superfamily. Classic translation factor GTPase family. EF-Tu/EF-1A subfamily. As to quaternary structure, monomer.

Its subcellular location is the cytoplasm. It carries out the reaction GTP + H2O = GDP + phosphate + H(+). Functionally, GTP hydrolase that promotes the GTP-dependent binding of aminoacyl-tRNA to the A-site of ribosomes during protein biosynthesis. This Aeromonas salmonicida (strain A449) protein is Elongation factor Tu.